We begin with the raw amino-acid sequence, 170 residues long: NADH-quinone oxidoreductase subunit B (170 aa).

[4Fe-4S] cluster contacts are provided by Cys37, Cys38, Cys102, and Cys131.

Belongs to the complex I 20 kDa subunit family. NDH-1 is composed of 14 different subunits. Subunits NuoB, C, D, E, F, and G constitute the peripheral sector of the complex. It depends on [4Fe-4S] cluster as a cofactor.

It is found in the cell inner membrane. It carries out the reaction a quinone + NADH + 5 H(+)(in) = a quinol + NAD(+) + 4 H(+)(out). Functionally, NDH-1 shuttles electrons from NADH, via FMN and iron-sulfur (Fe-S) centers, to quinones in the respiratory chain. The immediate electron acceptor for the enzyme in this species is believed to be ubiquinone. Couples the redox reaction to proton translocation (for every two electrons transferred, four hydrogen ions are translocated across the cytoplasmic membrane), and thus conserves the redox energy in a proton gradient. This is NADH-quinone oxidoreductase subunit B from Geobacter metallireducens (strain ATCC 53774 / DSM 7210 / GS-15).